The chain runs to 473 residues: Ras-GEF domain-containing family member 1B (473 aa).

In terms of domain architecture, N-terminal Ras-GEF spans 34–164 (HDNNLLSGSL…QMMQCLIRKL (131 aa)). A Ras-GEF domain is found at 204–452 (NDPYTLAQQL…LYLASYESEG (249 aa)).

Interacts with Ras family proteins. Interacts with CCDC124 during cytokinesis.

Its subcellular location is the early endosome. The protein localises to the late endosome. The protein resides in the midbody. Guanine nucleotide exchange factor (GEF) with specificity for RAP2A, it doesn't seems to activate other Ras family proteins (in vitro). In Homo sapiens (Human), this protein is Ras-GEF domain-containing family member 1B (RASGEF1B).